We begin with the raw amino-acid sequence, 351 residues long: UDP-N-acetylglucosamine transporter slc35b4 (351 aa).

Transmembrane regions (helical) follow at residues leucine 6–leucine 26, alanine 37–isoleucine 57, isoleucine 77–asparagine 97, isoleucine 104–glycine 124, glutamine 136–proline 156, phenylalanine 173–isoleucine 193, threonine 209–leucine 229, threonine 252–leucine 274, threonine 282–phenylalanine 302, and phenylalanine 306–threonine 326.

It belongs to the nucleotide-sugar transporter family. SLC35B subfamily.

It localises to the golgi apparatus membrane. Its function is as follows. Sugar transporter that specifically mediates the transport of UDP-N-acetylglucosamine (UDP-GlcNAc) from cytosol into Golgi. The sequence is that of UDP-N-acetylglucosamine transporter slc35b4 (slc35b4) from Dictyostelium discoideum (Social amoeba).